A 431-amino-acid polypeptide reads, in one-letter code: Serine/threonine-protein kinase Sgk1 (431 aa).

Residues 1–60 (MTVKTEAAKGTLTYSRMRGMVAILIAFMKQRRMGLNDFIQKIANNSYACKHPEVQSILKI) form a necessary for localization to the mitochondria region. The segment at 66-92 (PELMNANPSPPPSPSQQINLGPSSNPH) is disordered. Position 74 is a phosphoserine (Ser74). A Phosphoserine; by MAPK7 modification is found at Ser78. The segment covering 81-91 (QQINLGPSSNP) has biased composition (polar residues). One can recognise a Protein kinase domain in the interval 98–355 (FHFLKVIGKG…FMEIKSHVFF (258 aa)). Residues 104–112 (IGKGSFGKV) and Lys127 each bind ATP. The short motif at 131-141 (KKAILKKKEEK) is the Nuclear localization signal element. The Proton acceptor role is filled by Asp222. Thr256 bears the Phosphothreonine; by PDPK1 mark. The AGC-kinase C-terminal domain occupies 356 to 431 (SLINWDDLIN…SYAPPTDSFL (76 aa)). At Thr369 the chain carries Phosphothreonine; by PKA. A phosphoserine mark is found at Ser397, Ser401, and Ser422.

This sequence belongs to the protein kinase superfamily. AGC Ser/Thr protein kinase family. As to quaternary structure, homodimer; disulfide-linked. Forms a trimeric complex with FBXW7 and NOTCH1. Interacts with MAPK3/ERK1, MAPK1/ERK2, MAP2K1/MEK1, MAP2K2/MEK2, NEDD4, NEDD4L, MAPT/TAU, MAPK7, CREB1, SLC9A3R2/NHERF2 and KCNJ1/ROMK1. Associates with the mammalian target of rapamycin complex 2 (mTORC2) via an interaction with MAPKAP1/SIN1. Post-translationally, regulated by phosphorylation. Activated by phosphorylation on Ser-422 by mTORC2, transforming it into a substrate for PDPK1 which phosphorylates it on Thr-256. Phosphorylation on Ser-397 and Ser-401 are also essential for its activity. Phosphorylation on Ser-78 by MAPK7 is required for growth factor-induced cell cycle progression. Ubiquitinated by NEDD4L; which promotes proteasomal degradation. Ubiquitinated by SYVN1 at the endoplasmic reticulum; which promotes rapid proteasomal degradation and maintains a high turnover rate in resting cells. Isoform 2 shows enhanced stability. As to expression, expressed in most tissues with highest levels in the pancreas, followed by placenta, kidney and lung. Isoform 2 is strongly expressed in brain and pancreas, weaker in heart, placenta, lung, liver and skeletal muscle.

The protein resides in the cytoplasm. Its subcellular location is the nucleus. The protein localises to the endoplasmic reticulum membrane. It localises to the cell membrane. It is found in the mitochondrion. The catalysed reaction is L-seryl-[protein] + ATP = O-phospho-L-seryl-[protein] + ADP + H(+). It carries out the reaction L-threonyl-[protein] + ATP = O-phospho-L-threonyl-[protein] + ADP + H(+). With respect to regulation, two specific sites, one in the kinase domain (Thr-256) and the other in the C-terminal regulatory region (Ser-422), need to be phosphorylated for its full activation. Phosphorylation at Ser-397 and Ser-401 are also essential for its activity. Activated by WNK1, WNK2, WNK3 and WNK4; which promote phosphorylation by mTORC2. Serine/threonine-protein kinase which is involved in the regulation of a wide variety of ion channels, membrane transporters, cellular enzymes, transcription factors, neuronal excitability, cell growth, proliferation, survival, migration and apoptosis. Plays an important role in cellular stress response. Contributes to regulation of renal Na(+) retention, renal K(+) elimination, salt appetite, gastric acid secretion, intestinal Na(+)/H(+) exchange and nutrient transport, insulin-dependent salt sensitivity of blood pressure, salt sensitivity of peripheral glucose uptake, cardiac repolarization and memory consolidation. Up-regulates Na(+) channels: SCNN1A/ENAC, SCN5A and ASIC1/ACCN2, K(+) channels: KCNJ1/ROMK1, KCNA1-5, KCNQ1-5 and KCNE1, epithelial Ca(2+) channels: TRPV5 and TRPV6, chloride channels: BSND, CLCN2 and CFTR, glutamate transporters: SLC1A3/EAAT1, SLC1A2 /EAAT2, SLC1A1/EAAT3, SLC1A6/EAAT4 and SLC1A7/EAAT5, amino acid transporters: SLC1A5/ASCT2, SLC38A1/SN1 and SLC6A19, creatine transporter: SLC6A8, Na(+)/dicarboxylate cotransporter: SLC13A2/NADC1, Na(+)-dependent phosphate cotransporter: SLC34A2/NAPI-2B, glutamate receptor: GRIK2/GLUR6. Up-regulates carriers: SLC9A3/NHE3, SLC12A1/NKCC2, SLC12A3/NCC, SLC5A3/SMIT, SLC2A1/GLUT1, SLC5A1/SGLT1 and SLC15A2/PEPT2. Regulates enzymes: GSK3A/B, PMM2 and Na(+)/K(+) ATPase, and transcription factors: CTNNB1 and nuclear factor NF-kappa-B. Stimulates sodium transport into epithelial cells by enhancing the stability and expression of SCNN1A/ENAC. This is achieved by phosphorylating the NEDD4L ubiquitin E3 ligase, promoting its interaction with 14-3-3 proteins, thereby preventing it from binding to SCNN1A/ENAC and targeting it for degradation. Regulates store-operated Ca(+2) entry (SOCE) by stimulating ORAI1 and STIM1. Regulates KCNJ1/ROMK1 directly via its phosphorylation or indirectly via increased interaction with SLC9A3R2/NHERF2. Phosphorylates MDM2 and activates MDM2-dependent ubiquitination of p53/TP53. Phosphorylates MAPT/TAU and mediates microtubule depolymerization and neurite formation in hippocampal neurons. Phosphorylates SLC2A4/GLUT4 and up-regulates its activity. Phosphorylates APBB1/FE65 and promotes its localization to the nucleus. Phosphorylates MAPK1/ERK2 and activates it by enhancing its interaction with MAP2K1/MEK1 and MAP2K2/MEK2. Phosphorylates FBXW7 and plays an inhibitory role in the NOTCH1 signaling. Phosphorylates FOXO1 resulting in its relocalization from the nucleus to the cytoplasm. Phosphorylates FOXO3, promoting its exit from the nucleus and interference with FOXO3-dependent transcription. Phosphorylates BRAF and MAP3K3/MEKK3 and inhibits their activity. Phosphorylates SLC9A3/NHE3 in response to dexamethasone, resulting in its activation and increased localization at the cell membrane. Phosphorylates CREB1. Necessary for vascular remodeling during angiogenesis. Sustained high levels and activity may contribute to conditions such as hypertension and diabetic nephropathy. Isoform 2 exhibited a greater effect on cell plasma membrane expression of SCNN1A/ENAC and Na(+) transport than isoform 1. In Homo sapiens (Human), this protein is Serine/threonine-protein kinase Sgk1 (SGK1).